The following is a 162-amino-acid chain: Ribosome maturation factor RimP (162 aa).

The protein belongs to the RimP family.

Its subcellular location is the cytoplasm. Its function is as follows. Required for maturation of 30S ribosomal subunits. This is Ribosome maturation factor RimP from Ralstonia nicotianae (strain ATCC BAA-1114 / GMI1000) (Ralstonia solanacearum).